A 111-amino-acid chain; its full sequence is Translation initiation factor 1A (111 aa).

The S1-like domain maps to 11 to 83 (KKIRLPKEGE…ERADVTWRYT (73 aa)).

Belongs to the eIF-1A family.

Seems to be required for maximal rate of protein biosynthesis. Enhances ribosome dissociation into subunits and stabilizes the binding of the initiator Met-tRNA(I) to 40 S ribosomal subunits. This Methanopyrus kandleri (strain AV19 / DSM 6324 / JCM 9639 / NBRC 100938) protein is Translation initiation factor 1A (eIF1A).